An 89-amino-acid chain; its full sequence is UPF0367 protein PCC8801_1959 (89 aa).

The protein belongs to the UPF0367 family.

The sequence is that of UPF0367 protein PCC8801_1959 from Rippkaea orientalis (strain PCC 8801 / RF-1) (Cyanothece sp. (strain PCC 8801)).